A 293-amino-acid chain; its full sequence is Methylsterol monooxygenase 1 (293 aa).

2 consecutive transmembrane segments (helical) span residues 55-75 and 100-120; these read LIVH…FQFI and GILF…YYFT. Residues 144–274 form the Fatty acid hydroxylase domain; sequence GCAVIEDTWH…FTWWDRIFGT (131 aa). Positions 157-161 match the Histidine box-1 motif; sequence HRLLH. A Histidine box-2 motif is present at residues 170 to 174; sequence HKVHH. Residues 199-219 form a helical membrane-spanning segment; sequence FFIGIVLLCDHVILLWAWVTM. The Histidine box-3 motif lies at 249-255; sequence HHDFHHM.

This sequence belongs to the sterol desaturase family. Requires Fe cation as cofactor. In terms of processing, ubiquitinated by MARCHF6, leading to proteasomal degradation.

The protein resides in the endoplasmic reticulum membrane. It carries out the reaction 4,4-dimethyl-5alpha-cholest-7-en-3beta-ol + 6 Fe(II)-[cytochrome b5] + 3 O2 + 5 H(+) = 4alpha-carboxy-4beta-methyl-5alpha-cholest-7-ene-3beta-ol + 6 Fe(III)-[cytochrome b5] + 4 H2O. The enzyme catalyses 4,4-dimethyl-5alpha-cholesta-8,24-dien-3beta-ol + 6 Fe(II)-[cytochrome b5] + 3 O2 + 5 H(+) = 4beta-methylzymosterol-4alpha-carboxylate + 6 Fe(III)-[cytochrome b5] + 4 H2O. It catalyses the reaction 4alpha-methylzymosterol + 6 Fe(II)-[cytochrome b5] + 3 O2 + 5 H(+) = 4alpha-carboxyzymosterol + 6 Fe(III)-[cytochrome b5] + 4 H2O. The catalysed reaction is 4alpha-methyl-5alpha-cholest-7-en-3beta-ol + 6 Fe(II)-[cytochrome b5] + 3 O2 + 5 H(+) = 4alpha-carboxy-5alpha-cholest-7-en-3beta-ol + 6 Fe(III)-[cytochrome b5] + 4 H2O. It carries out the reaction 4,4-dimethyl-5alpha-cholest-8-en-3beta-ol + 6 Fe(II)-[cytochrome b5] + 3 O2 + 5 H(+) = 4alpha-carboxy-4beta-methyl-5alpha-cholest-8-en-3beta-ol + 6 Fe(III)-[cytochrome b5] + 4 H2O. The enzyme catalyses 4alpha-methyl-5alpha-cholest-8-en-3beta-ol + 6 Fe(II)-[cytochrome b5] + 3 O2 + 5 H(+) = 4alpha-carboxy-5alpha-cholest-8-ene-3beta-ol + 6 Fe(III)-[cytochrome b5] + 4 H2O. The protein operates within steroid biosynthesis; zymosterol biosynthesis; zymosterol from lanosterol: step 3/6. Its pathway is steroid biosynthesis; cholesterol biosynthesis. Functionally, catalyzes the three-step monooxygenation required for the demethylation of 4,4-dimethyl and 4alpha-methylsterols, which can be subsequently metabolized to cholesterol. This chain is Methylsterol monooxygenase 1 (Msmo1), found in Rattus norvegicus (Rat).